A 504-amino-acid chain; its full sequence is Anaerobic nitric oxide reductase transcription regulator NorR (504 aa).

The residue at position 57 (D57) is a 4-aspartylphosphate. Residues 187–416 (MIGLSPGMTQ…LEHAIHRAVV (230 aa)) enclose the Sigma-54 factor interaction domain. ATP contacts are provided by residues 215–222 (GETGTGKE) and 278–287 (ADNGTLFLDE). Positions 479 to 498 (WAACARMLETDVANLHRLAK) form a DNA-binding region, H-T-H motif.

Its pathway is nitrogen metabolism; nitric oxide reduction. Required for the expression of anaerobic nitric oxide (NO) reductase, acts as a transcriptional activator for at least the norVW operon. Activation also requires sigma-54. This Escherichia coli O81 (strain ED1a) protein is Anaerobic nitric oxide reductase transcription regulator NorR.